Reading from the N-terminus, the 349-residue chain is MIEYPHIPVMLEESIQGLGVIPGGRYVDCTLGAGGHSEAILEHSYPGGQLLSIDADPSAITLAAERLKSFGSSVLLVNDNFANLKDICQRYEYMPVHGILFDLGLSSMQLDRQESGFSFQTEAPLDMRFSPEQELTAADIINGYDVTELSDLIWKYGEEPFSRRIARAIAEKRPFKTTTELAAAIERAVGGRHGRIHPATRTFQALRIAVNEELSHLESALSQAHSLLGHGGRLVVISYHSLEDRIVKQYFQKEAKGCICPDDIPQCVCDHQPSLRIINRRVITPSDEEISRNPRSRSAKMRVAERIIEPGEGRFFSSREDELVNHVSRTGSVQHGQAKHKGVVQRGGS.

S-adenosyl-L-methionine-binding positions include Gly34 to His36, Asp54, Phe81, Asp102, and Gln109. Residues Ser328–Ser349 form a disordered region.

The protein belongs to the methyltransferase superfamily. RsmH family.

The protein localises to the cytoplasm. The catalysed reaction is cytidine(1402) in 16S rRNA + S-adenosyl-L-methionine = N(4)-methylcytidine(1402) in 16S rRNA + S-adenosyl-L-homocysteine + H(+). In terms of biological role, specifically methylates the N4 position of cytidine in position 1402 (C1402) of 16S rRNA. This chain is Ribosomal RNA small subunit methyltransferase H, found in Dehalococcoides mccartyi (strain ATCC BAA-2100 / JCM 16839 / KCTC 5957 / BAV1).